The sequence spans 956 residues: RNA-silencing factor ers1 (956 aa).

The protein resides in the cytoplasm. It localises to the cytoskeleton. It is found in the microtubule organizing center. Its subcellular location is the spindle pole body. Its function is as follows. Involved in RNAi-dependent heterochromatin formation and centromeric silencing. Required for the conversion of centromeric pre-small interfering RNA transcripts into small interfering RNAs, histone H3 'Lys9' methylation, and the recruitment of the RITS complex to centromeric sequences. The sequence is that of RNA-silencing factor ers1 (ers1) from Schizosaccharomyces pombe (strain 972 / ATCC 24843) (Fission yeast).